Reading from the N-terminus, the 670-residue chain is DNA ligase (670 aa).

NAD(+) contacts are provided by residues 32 to 36, 81 to 82, and glutamate 113; these read DAEYD and SL. Residue lysine 115 is the N6-AMP-lysine intermediate of the active site. NAD(+) contacts are provided by arginine 136, glutamate 173, lysine 290, and lysine 314. The Zn(2+) site is built by cysteine 408, cysteine 411, cysteine 426, and cysteine 432. One can recognise a BRCT domain in the interval 592–670; it reads EIDSPFAGKT…EAEMIRLLGE (79 aa).

The protein belongs to the NAD-dependent DNA ligase family. LigA subfamily. The cofactor is Mg(2+). Mn(2+) serves as cofactor.

The catalysed reaction is NAD(+) + (deoxyribonucleotide)n-3'-hydroxyl + 5'-phospho-(deoxyribonucleotide)m = (deoxyribonucleotide)n+m + AMP + beta-nicotinamide D-nucleotide.. In terms of biological role, DNA ligase that catalyzes the formation of phosphodiester linkages between 5'-phosphoryl and 3'-hydroxyl groups in double-stranded DNA using NAD as a coenzyme and as the energy source for the reaction. It is essential for DNA replication and repair of damaged DNA. The chain is DNA ligase from Yersinia pseudotuberculosis serotype IB (strain PB1/+).